Consider the following 381-residue polypeptide: Creatine kinase B-type (381 aa).

Position 4 is a phosphoserine (Ser4). Residues 11–98 form the Phosphagen kinase N-terminal domain; sequence KLRFPAEDEF…FDPIIEERHG (88 aa). Residue Thr35 is modified to Phosphothreonine. A Glycyl lysine isopeptide (Lys-Gly) (interchain with G-Cter in ubiquitin) cross-link involves residue Lys45. Val72 contacts creatine. A compositionally biased stretch (basic and acidic residues) spans 96 to 110; it reads RHGGYQPSDEHKTDL. Residues 96 to 123 are disordered; it reads RHGGYQPSDEHKTDLNPDNLQGGDDLDP. Residue Lys107 forms a Glycyl lysine isopeptide (Lys-Gly) (interchain with G-Cter in ubiquitin) linkage. The residue at position 125 (Tyr125) is a Phosphotyrosine. One can recognise a Phosphagen kinase C-terminal domain in the interval 125 to 367; sequence YVLSSRVRTG…KLLIEMEQRL (243 aa). Residues 128–132, Arg130, Arg132, and His191 each bind ATP; that span reads SSRVR. An internal MTS-like signal region spans residues 130–138; it reads RVRTGRSIR. At Ser199 the chain carries Phosphoserine. Position 232 (Glu232) interacts with creatine. Arg236 contributes to the ATP binding site. Tyr269 bears the 3'-nitrotyrosine mark. Ser285 lines the creatine pocket. Arg292 is an ATP binding site. Ser309 is modified (phosphoserine). ATP is bound by residues Arg320, 320-325, and Asp335; that span reads RGTGGV. Thr322 is subject to Phosphothreonine. Lys381 is covalently cross-linked (Glycyl lysine isopeptide (Lys-Gly) (interchain with G-Cter in ubiquitin)).

The protein belongs to the ATP:guanido phosphotransferase family. Dimer of identical or non-identical chains, which can be either B (brain type) or M (muscle type). With MM being the major form in skeletal muscle and myocardium, MB existing in myocardium, and BB existing in many tissues, especially brain. Interacts with SLC12A6 (via C-terminus); the interaction may be required for SLC12A6 potassium-chloride cotransport activity. Ubiquitinated by the ECS(ASB9) complex, leading to its degradation by the proteasome. In terms of tissue distribution, expressed in hippocampus and corpus callosum (at protein level).

Its subcellular location is the cytoplasm. The protein localises to the cytosol. It is found in the mitochondrion. It localises to the cell membrane. It catalyses the reaction creatine + ATP = N-phosphocreatine + ADP + H(+). Functionally, reversibly catalyzes the transfer of phosphate between ATP and various phosphogens (e.g. creatine phosphate). Creatine kinase isoenzymes play a central role in energy transduction in tissues with large, fluctuating energy demands, such as skeletal muscle, heart, brain and spermatozoa. Acts as a key regulator of adaptive thermogenesis as part of the futile creatine cycle: localizes to the mitochondria of thermogenic fat cells and acts by mediating phosphorylation of creatine to initiate a futile cycle of creatine phosphorylation and dephosphorylation. During the futile creatine cycle, creatine and N-phosphocreatine are in a futile cycle, which dissipates the high energy charge of N-phosphocreatine as heat without performing any mechanical or chemical work. The sequence is that of Creatine kinase B-type from Mus musculus (Mouse).